The sequence spans 522 residues: MRGPCSVITALLVVASSQIAAESDYRLQAYHHDVTAVGNAVVKPLPKRYLRGSQHVLDSNEERSVYSVLASMINEGVSKMPQAAEAVEKMPQAAEAVEKMPQAAEAVEKMPQAAEAVEKMPQAAEAVEKMPSAAMAGKKVSRVTKTGKKMPHAAEIEAVEETLHATNARKEPLRADFVEEMPHAAKAKEEMRRAKQHDLLRATEEADEALEKSWHSSEDTAAIGGASRGISSNVILSLKKWKNNFQGMRAMAVSGEHEDIIKPIHEAFVRLCGENMEPTTKEMTLIRNMLDWDVAASPESSHRQNLVSQAQRHVLIGLRIMQRDPEVWNEWNELSESLRFGVLDYLLNLHYQRWVRMYNIFKRHRPDKKDVPMNDKLSLGGNTDKNSALALQTHSKKQNLYPDEPSNVAWTSKKRDGSVLIERSKRTFNGNTDTASVPYKQLKMQSLKPVMPFLTRSTTSGHHSVSIKNPGLSFDGPIFAFVPPNVHKSQSLTPPLVHKDVDTELSLGGIYDRSTHKAPTVP.

The N-terminal stretch at 1-21 (MRGPCSVITALLVVASSQIAA) is a signal peptide. A RxLR-dEER motif is present at residues 48-63 (RYLRGSQHVLDSNEER).

This sequence belongs to the RxLR effector family.

It is found in the secreted. The protein localises to the host nucleus. It localises to the host cytoplasm. Its function is as follows. Secreted effector that dos not suppress the host cell death induced by cell death-inducing proteins. This Plasmopara viticola (Downy mildew of grapevine) protein is Secreted RxLR effector protein 105.